The following is a 95-amino-acid chain: Secretoglobin family 2A member 2 (95 aa).

Positions Met-1 to Ala-18 are cleaved as a signal peptide. Asn-35 carries N-linked (GlcNAc...) asparagine glycosylation.

The protein belongs to the secretoglobin family. Lipophilin subfamily. As to quaternary structure, prostatein is composed of three different peptides called C1, C2 and C3. These form covalent C1:C3 (F) and C2:C3 (S) heterodimers whose non-covalent association forms tetrameric (C1:C3/C3:C2) prostatein molecules. Highly expressed in ventral prostate.

Its subcellular location is the secreted. Its function is as follows. Part of prostatein which is the major secretory glycoprotein of ventral prostate gland. Steroid-binding protein; can bind non-polar steroids, cholesterol and a group of small proline-rich peptides. This is Secretoglobin family 2A member 2 (Scgb2a2) from Rattus norvegicus (Rat).